Consider the following 426-residue polypeptide: Glutamate-1-semialdehyde 2,1-aminomutase (426 aa).

At lysine 265 the chain carries N6-(pyridoxal phosphate)lysine.

Belongs to the class-III pyridoxal-phosphate-dependent aminotransferase family. HemL subfamily. In terms of assembly, homodimer. The cofactor is pyridoxal 5'-phosphate.

It is found in the cytoplasm. It carries out the reaction (S)-4-amino-5-oxopentanoate = 5-aminolevulinate. It functions in the pathway porphyrin-containing compound metabolism; protoporphyrin-IX biosynthesis; 5-aminolevulinate from L-glutamyl-tRNA(Glu): step 2/2. The chain is Glutamate-1-semialdehyde 2,1-aminomutase from Salmonella arizonae (strain ATCC BAA-731 / CDC346-86 / RSK2980).